We begin with the raw amino-acid sequence, 494 residues long: UPF0371 protein SP70585_0405 (494 aa).

Belongs to the UPF0371 family.

This Streptococcus pneumoniae (strain 70585) protein is UPF0371 protein SP70585_0405.